Here is a 364-residue protein sequence, read N- to C-terminus: Photoreceptor outer segment membrane glycoprotein 2 (364 aa).

The Cytoplasmic segment spans residues 1 to 24 (MTVLKVKFTKTKRDKLAQILWILN). Residues 25-43 (WVSVVSGIILFSLGLFLKI) form a helical membrane-spanning segment. Residues 44–61 (EIKKRNEVMAKGDINSVP) are Lumenal-facing. Residues 62–80 (NMLISVGVIACVVNFLGGK) form a helical membrane-spanning segment. Residues 81-99 (ICYDCSDANKFSRWKLIML) are Cytoplasmic-facing. The helical transmembrane segment at 100–123 (PYIICTFCFTFCILLGALMCYTMR) threads the bilayer. The Lumenal segment spans residues 124 to 264 (NELEESLYLG…LEYYTAIMRS (141 aa)). N229 is a glycosylation site (N-linked (GlcNAc...) asparagine). A helical transmembrane segment spans residues 265-290 (IGIAALLIWLFELSVLIGVRYLQTAM). Over 291-364 (KNVLLQGDLQ…VTAKSIPAAS (74 aa)) the chain is Cytoplasmic.

It belongs to the PRPH2/ROM1 family.

Its subcellular location is the membrane. The chain is Photoreceptor outer segment membrane glycoprotein 2 from Gallus gallus (Chicken).